A 136-amino-acid chain; its full sequence is Ribosome-binding factor A (136 aa).

Belongs to the RbfA family. Monomer. Binds 30S ribosomal subunits, but not 50S ribosomal subunits or 70S ribosomes.

It localises to the cytoplasm. Its function is as follows. One of several proteins that assist in the late maturation steps of the functional core of the 30S ribosomal subunit. Associates with free 30S ribosomal subunits (but not with 30S subunits that are part of 70S ribosomes or polysomes). Required for efficient processing of 16S rRNA. May interact with the 5'-terminal helix region of 16S rRNA. In Yersinia enterocolitica serotype O:8 / biotype 1B (strain NCTC 13174 / 8081), this protein is Ribosome-binding factor A.